The primary structure comprises 156 residues: Succinate dehydrogenase assembly factor 2-B, mitochondrial (156 aa).

The N-terminal 24 residues, M1–L24, are a transit peptide targeting the mitochondrion.

It belongs to the SDHAF2 family. As to quaternary structure, interacts with the flavoprotein subunit within the SDH catalytic dimer.

It is found in the mitochondrion matrix. Functionally, plays an essential role in the assembly of succinate dehydrogenase (SDH), an enzyme complex (also referred to as respiratory complex II) that is a component of both the tricarboxylic acid (TCA) cycle and the mitochondrial electron transport chain, and which couples the oxidation of succinate to fumarate with the reduction of ubiquinone (coenzyme Q) to ubiquinol. Required for flavinylation (covalent attachment of FAD) of the flavoprotein subunit of the SDH catalytic dimer. The polypeptide is Succinate dehydrogenase assembly factor 2-B, mitochondrial (Drosophila erecta (Fruit fly)).